The sequence spans 198 residues: Suppressor of cytokine signaling 2 (198 aa).

The tract at residues 1 to 75 is interaction with AREL1; the sequence is MTLRCLESSG…PEGTFLIRDS (75 aa). The disordered stretch occupies residues 6–30; the sequence is LESSGNGAEGAQSQWGTAGSAEEPS. A compositionally biased stretch (polar residues) spans 8 to 22; sequence SSGNGAEGAQSQWGT. Phosphoserine occurs at positions 30 and 52. The 109-residue stretch at 48–156 folds into the SH2 domain; that stretch reads WYWGSMTVNE…TVHLYLTKPL (109 aa). In terms of domain architecture, SOCS box spans 151-197; that stretch reads YLTKPLYTSAPPLQHLCRLTINKCTSTVWGLPLPTRLKDYLEEYKFQ. Lysine 173 participates in a covalent cross-link: Glycyl lysine isopeptide (Lys-Gly) (interchain with G-Cter in ubiquitin).

As to quaternary structure, substrate-recognition component of the ECS(SOCS2) complex, composed of SOCS2, CUL5, ELOB, ELOC and RNF7/RBX2. Interacts with IGF1R. Interacts with DCUN1D1. Post-translationally, ubiquitinated; mediated by AREL1 and leading to its subsequent proteasomal degradation. Ubiquitination is dependent on its phosphorylation at Ser-52, by PKC. Ubiquitination is stimulated by LPS. Phosphorylation at Ser-52 by PKC facilitates its ubiquitination and proteasomal degradation.

It localises to the cytoplasm. It functions in the pathway protein modification; protein ubiquitination. Its function is as follows. Substrate-recognition component of a cullin-5-RING E3 ubiquitin-protein ligase complex (ECS complex, also named CRL5 complex), which mediates the ubiquitination and subsequent proteasomal degradation of target proteins, such as EPOR and GHR. Specifically recognizes and binds phosphorylated proteins via its SH2 domain, promoting their ubiquitination. The ECS(SOCS2) complex acts as a key regulator of growth hormone receptor (GHR) levels by mediating ubiquitination and degradation of GHR, following GHR phosphorylation by JAK2. The ECS(SOCS2) also catalyzes ubiquitination and degradation of JAK2-phosphorylated EPOR. In Bos taurus (Bovine), this protein is Suppressor of cytokine signaling 2 (SOCS2).